Consider the following 288-residue polypeptide: Protoheme IX farnesyltransferase 2 (288 aa).

Transmembrane regions (helical) follow at residues 8-28 (ITKP…FFLA), 36-56 (LMLF…GCVV), 85-105 (VAFV…FQLV), 108-128 (LSAV…TMWY), 131-151 (NSVY…LVGY), 152-172 (LAVT…FCLW), 211-231 (AYVV…EAGY), 233-252 (YLAV…FRSI), and 267-287 (VSLL…IPLA).

It belongs to the UbiA prenyltransferase family. Protoheme IX farnesyltransferase subfamily.

It localises to the cell inner membrane. The enzyme catalyses heme b + (2E,6E)-farnesyl diphosphate + H2O = Fe(II)-heme o + diphosphate. It participates in porphyrin-containing compound metabolism; heme O biosynthesis; heme O from protoheme: step 1/1. Functionally, converts heme B (protoheme IX) to heme O by substitution of the vinyl group on carbon 2 of heme B porphyrin ring with a hydroxyethyl farnesyl side group. This is Protoheme IX farnesyltransferase 2 from Vibrio parahaemolyticus serotype O3:K6 (strain RIMD 2210633).